We begin with the raw amino-acid sequence, 292 residues long: AKT-interacting protein (292 aa).

The tract at residues 1–64 is disordered; sequence MNPFWNMSSA…ISPSPSVQPT (64 aa). The span at 14–23 shows a compositional bias: basic and acidic residues; sequence KRSDNDEKIA. Positions 75 to 223 constitute a UBC core domain; the sequence is YLEYSLLAEF…VVDSVKLCNS (149 aa). Residues 273 to 292 are disordered; sequence SWVKPGSVLPFSKEENSLQT.

Belongs to the ubiquitin-conjugating enzyme family. FTS subfamily.

It localises to the cytoplasm. Its subcellular location is the cell membrane. In terms of biological role, may function to promote vesicle trafficking and/or fusion. May also regulate apoptosis. This is AKT-interacting protein (aktip) from Xenopus tropicalis (Western clawed frog).